The primary structure comprises 578 residues: Vesicular acetylcholine transporter (578 aa).

Residues 1-32 lie on the Cytoplasmic side of the membrane; sequence MASFQIPVINLEVREVKDIVWEKIQEPVNQRR. Residues 33–53 traverse the membrane as a helical segment; it reads LILVIVSIALLLDNMLYMVIV. The Lumenal, vesicle segment spans residues 54–98; that stretch reads PIIPDYLREIGSFDDGPTPPPLRDNITGKIIPVHHDHHGQDSATG. A glycan (N-linked (GlcNAc...) asparagine) is linked at asparagine 78. A helical transmembrane segment spans residues 99–119; sequence ILFASKAIVQLMVNPFSGGLI. The Cytoplasmic portion of the chain corresponds to 120-125; it reads DKIGYD. Residues 126–146 form a helical membrane-spanning segment; the sequence is LPMMIGLTIMFFSTAVFACGS. The Lumenal, vesicle portion of the chain corresponds to 147–154; that stretch reads SYSVLFFA. The helical transmembrane segment at 155 to 175 threads the bilayer; it reads RSLQGAGSAFADTAGLAMIAD. Topologically, residues 176 to 187 are cytoplasmic; that stretch reads RFTEENERSQAL. Residues 188 to 208 traverse the membrane as a helical segment; the sequence is GIALAFISFGCLVAPPFGGAL. Topologically, residues 209–215 are lumenal, vesicle; that stretch reads YQFAGKE. The helical transmembrane segment at 216–236 threads the bilayer; it reads VPFLILALVCLLDGLMLLLVM. Topologically, residues 237-263 are cytoplasmic; sequence KPVKEAMKQSKDVQDQVIPIWRLLMDP. A helical transmembrane segment spans residues 264-284; sequence YIAVCAGALTMSNVALAFLEP. At 285–299 the chain is on the lumenal, vesicle side; it reads TISLWMEDNMTTDNW. Asparagine 293 is a glycosylation site (N-linked (GlcNAc...) asparagine). Residues 300-320 traverse the membrane as a helical segment; the sequence is KIGMVWLPAFFPHVLGVVITV. Topologically, residues 321-330 are cytoplasmic; it reads KMARKYPQHQ. Residues 331–351 traverse the membrane as a helical segment; the sequence is WLMAAGGLALEGFSCFIIPFC. The Lumenal, vesicle portion of the chain corresponds to 352 to 355; sequence SGYK. The helical transmembrane segment at 356–376 threads the bilayer; sequence MLMLPICVICFGIALIDTALL. Residues 377 to 387 are Cytoplasmic-facing; that stretch reads PTLGYLVDVRY. A helical membrane pass occupies residues 388–408; sequence VSVYGSIYAIADISYSIAYAV. The Lumenal, vesicle portion of the chain corresponds to 409–413; the sequence is GPIIA. A helical transmembrane segment spans residues 414–434; sequence GGVVEAIGFTALNFLIAFSNL. Residues 435 to 578 are Cytoplasmic-facing; the sequence is AYVPVLRKLR…APANPFRQGF (144 aa). Composition is skewed to low complexity over residues 507–534 and 549–563; these read EYQQ…EQGG and QQQQ…QQVQ. The tract at residues 507–578 is disordered; the sequence is EYQQQQQGYQ…APANPFRQGF (72 aa).

The protein belongs to the major facilitator superfamily. Vesicular transporter family.

The protein localises to the membrane. Its function is as follows. Involved in acetylcholine transport into synaptic vesicles. The chain is Vesicular acetylcholine transporter (VAChT) from Drosophila melanogaster (Fruit fly).